The primary structure comprises 310 residues: Putative S-adenosyl-L-methionine-dependent methyltransferase ML2640 (310 aa).

Residues aspartate 132 and 161 to 162 (DL) each bind S-adenosyl-L-methionine.

Belongs to the UPF0677 family.

Exhibits S-adenosyl-L-methionine-dependent methyltransferase activity. The chain is Putative S-adenosyl-L-methionine-dependent methyltransferase ML2640 from Mycobacterium leprae (strain TN).